The following is a 697-amino-acid chain: Potassium-transporting ATPase ATP-binding subunit (697 aa).

4 consecutive transmembrane segments (helical) span residues 55–75 (PIMF…FLPS), 79–99 (SIPG…VLFA), 245–265 (LTLI…YLGF), and 271–291 (VLVA…LSAI). Residue D324 is the 4-aspartylphosphate intermediate of the active site. ATP is bound by residues D361, E365, 393-400 (FKAETRMS), and K412. Mg(2+) is bound by residues D535 and D539. Transmembrane regions (helical) follow at residues 605-625 (FAII…LNIM), 633-653 (AILS…PLAM), and 677-697 (GGVI…GLFI).

It belongs to the cation transport ATPase (P-type) (TC 3.A.3) family. Type IA subfamily. The system is composed of three essential subunits: KdpA, KdpB and KdpC.

The protein resides in the cell membrane. The catalysed reaction is K(+)(out) + ATP + H2O = K(+)(in) + ADP + phosphate + H(+). Its function is as follows. Part of the high-affinity ATP-driven potassium transport (or Kdp) system, which catalyzes the hydrolysis of ATP coupled with the electrogenic transport of potassium into the cytoplasm. This subunit is responsible for energy coupling to the transport system and for the release of the potassium ions to the cytoplasm. The sequence is that of Potassium-transporting ATPase ATP-binding subunit from Bacillus cereus (strain G9842).